We begin with the raw amino-acid sequence, 285 residues long: GPN-loop GTPase 3 (285 aa).

13-18 is a binding site for GTP; that stretch reads GSGKST. The Gly-Pro-Asn (GPN)-loop; involved in dimer interface motif lies at 72–74; that stretch reads GPN. 174 to 177 contacts GTP; it reads TKMD. Residues 261-285 form a disordered region; that stretch reads KEPKENEEDKSENFDEFFQDRADEP. Residues 265–277 show a composition bias toward acidic residues; that stretch reads ENEEDKSENFDEF.

Belongs to the GPN-loop GTPase family. Heterodimer with gpn1. Binds to RNA polymerase II (RNAPII).

In terms of biological role, small GTPase required for proper localization of RNA polymerase II (RNAPII). May act at an RNAP assembly step prior to nuclear import. The sequence is that of GPN-loop GTPase 3 from Xenopus tropicalis (Western clawed frog).